The primary structure comprises 926 residues: Sperm-associated antigen 1 (926 aa).

TPR repeat units lie at residues 209–242 (ATRE…LPTV), 244–275 (AYNN…EPGN), and 276–309 (VKAL…EPDN). Residues 318-452 (EVERDLKNSE…ENPAGLKSQG (135 aa)) form a disordered region. 2 positions are modified to phosphoserine: serine 347 and serine 354. Residues 352-368 (GKSGRKHEDGGGDKKPA) are compositionally biased toward basic and acidic residues. Residues 369–379 (EPAGAARAAQP) show a composition bias toward low complexity. Serine 423 carries the phosphoserine modification. Over residues 428-441 (AGGGATGHPGGGQG) the composition is skewed to gly residues. TPR repeat units follow at residues 445–478 (PAGL…LEPA), 487–520 (SILY…HPFS), 522–554 (KPLL…DCGL), 623–656 (FKAL…NNKE), 657–690 (CAIY…ADGN), and 692–724 (KAFY…DPSI). Basic and acidic residues-rich tracts occupy residues 758–769 (IQEVNEGKEEPG) and 784–799 (KGGK…EKLP). Positions 758–801 (IQEVNEGKEEPGRPAGEVSMGCLASEKGGKSSRSPEDPEKLPIA) are disordered. A GTP-binding site is contributed by 781–788 (ASEKGGKS). The residue at position 791 (serine 791) is a Phosphoserine.

As to expression, present in most tissues, including lung, with the strongest expression in brain, colon, kidney, and testis. In sperm and testis, detected in particular in pachytene primary spermatocytes. Up-regulated in pancreatic tumor tissues and not in normal pancreatic tissue.

It localises to the cytoplasm. Its subcellular location is the dynein axonemal particle. In terms of biological role, may play a role in the cytoplasmic assembly of the ciliary dynein arms. May play a role in fertilization. Binds GTP and has GTPase activity. This chain is Sperm-associated antigen 1 (SPAG1), found in Homo sapiens (Human).